The following is a 710-amino-acid chain: Probable inactive DNA (cytosine-5)-methyltransferase DRM3 (710 aa).

The segment at 1–21 (MADMRRRNGSGGSSNHERNEQ) is disordered. Positions 52–92 (SGSNVKSLLIEMGFCPTLVQKAIDENGQDDFELLLEILTKS) constitute a UBA 1 domain. A compositionally biased stretch (acidic residues) spans 167–184 (ESEDSLDGAEINEEDEDV). The tract at residues 167-192 (ESEDSLDGAEINEEDEDVTPVTARGP) is disordered. Positions 198-242 (QLFETMDKTLRLLEMGFSNDEISMAIEKIGTKGQISVLAESIVTG) constitute a UBA 2 domain. A disordered region spans residues 282 to 360 (AQKEDGGGGS…MGDSSSFMET (79 aa)). Over residues 339–350 (YDDRGKRLRPED) the composition is skewed to basic and acidic residues. The SAM-dependent MTase DRM-type domain maps to 379-710 (QPRLSQSLGP…RVTKRVRDMM (332 aa)).

Belongs to the class I-like SAM-binding methyltransferase superfamily. DRM-methyltransferase family. In terms of assembly, interacts with Pol V.

The protein resides in the nucleus. Its function is as follows. Catalytically inactive DNA methyltransferase that acts as regulatory factor for DRM2-mediated DNA methylation. Required for maintenance of non-CpG DNA methylation. Required for normal establishment and maintenance of RNA-directed DNA methylation (RdDM) and accumulation of specific repeat-associated small interfering RNAs (siRNAs). Required for nucleolus organizer region (NOR) nuclear organization during interphase. Acts downstream of the production of siRNAs. May promote RNA polymerase V (Pol V) transcriptional elongation or assist in the stabilization of Pol V transcripts. The protein is Probable inactive DNA (cytosine-5)-methyltransferase DRM3 of Arabidopsis thaliana (Mouse-ear cress).